A 101-amino-acid polypeptide reads, in one-letter code: Phosphoribosyl-AMP cyclohydrolase (101 aa).

Asp-71 provides a ligand contact to Mg(2+). Cys-72 serves as a coordination point for Zn(2+). Asp-73 and Asp-75 together coordinate Mg(2+). Residues Cys-88 and Cys-95 each contribute to the Zn(2+) site.

The protein belongs to the PRA-CH family. Homodimer. It depends on Mg(2+) as a cofactor. Zn(2+) is required as a cofactor.

The protein localises to the cytoplasm. The catalysed reaction is 1-(5-phospho-beta-D-ribosyl)-5'-AMP + H2O = 1-(5-phospho-beta-D-ribosyl)-5-[(5-phospho-beta-D-ribosylamino)methylideneamino]imidazole-4-carboxamide. It functions in the pathway amino-acid biosynthesis; L-histidine biosynthesis; L-histidine from 5-phospho-alpha-D-ribose 1-diphosphate: step 3/9. In terms of biological role, catalyzes the hydrolysis of the adenine ring of phosphoribosyl-AMP. The polypeptide is Phosphoribosyl-AMP cyclohydrolase (Bacillus cereus (strain AH820)).